A 457-amino-acid polypeptide reads, in one-letter code: MGQDGSPAHKRPSGSGGGLPTTTLTNGGGRGGRGGLLPRGRQMQKTFNNIKITILCGFVTILVLRGTIGVGNLGSSSADAVNQNIIEETNRILAEIRSDSDPTDLDEPQEGDMNPNATYVLGPKITDWDSQRKVWLNQNPEFPSTVNGKARILLLTGSPPKPCDNPIGDHYLLKSVKNKIDYCRLHGIEIVYNMAHLDKELAGYWAKLPMIRRLMLSHPEVEWIWWMDSDALFTDILFQIPLARYQKHNLVIHGYPDLLFDQKSWIALNTGSFLLRNCQWSLDLLDAWAPMGPKGPIRDEAGKVLTAYLKGRPAFEADDQSALIYLLLSQKDTWMEKVFVENQYYLHGFWEGLVDRYEEMIEKYHPGLGDERWPFVTHFVGCKPCGSYADYAVERCLKSMERAFNFADNQVLKLYGFSHRGLLSPKIKRIRNETVSPLEFVDKFDIRRTPVETKPQN.

Residues 1-40 form a disordered region; sequence MGQDGSPAHKRPSGSGGGLPTTTLTNGGGRGGRGGLLPRG. At 1–51 the chain is on the cytoplasmic side; it reads MGQDGSPAHKRPSGSGGGLPTTTLTNGGGRGGRGGLLPRGRQMQKTFNNIK. Residues 26-37 are compositionally biased toward gly residues; that stretch reads NGGGRGGRGGLL. Residues 52–72 traverse the membrane as a helical; Signal-anchor for type II membrane protein segment; that stretch reads ITILCGFVTILVLRGTIGVGN. Residues 73-457 lie on the Lumenal side of the membrane; the sequence is LGSSSADAVN…RTPVETKPQN (385 aa). Residues 97-116 form a disordered region; that stretch reads RSDSDPTDLDEPQEGDMNPN. The span at 101-110 shows a compositional bias: acidic residues; it reads DPTDLDEPQE. N-linked (GlcNAc...) asparagine glycosylation is found at N116 and N432.

Belongs to the glycosyltransferase 34 family. Interacts with XXT2 and CSLC4. Interacts with FUT1 and XLT2. In terms of tissue distribution, highly expressed in roots, stems and cauline leaves, and at lower levels in rosette leaves, flowers and siliques.

It localises to the golgi apparatus membrane. It catalyses the reaction Transfers an alpha-D-xylosyl residue from UDP-D-xylose to a glucose residue in xyloglucan, forming an alpha-(1-&gt;6)-D-xylosyl-D-glucose linkage.. Functionally, probable xyloglucan xylosyltransferase involved in the biosynthesis of xyloglucan in roots. May act in association with XXT1 and XXT2. Associates with other xyloglucan-synthesizing enzymes to form multiprotein complexes for xyloglucan synthesis in the Golgi. The sequence is that of Probable xyloglucan 6-xylosyltransferase 5 from Arabidopsis thaliana (Mouse-ear cress).